The following is a 477-amino-acid chain: Methionine aminopeptidase 2 (477 aa).

Residues 1–121 are disordered; sequence MAGVEEAASC…TDPPSVPICD (121 aa). N-acetylalanine is present on alanine 2. Basic residues predominate over residues 36–46; the sequence is KKKKRKKKKSK. A Phosphoserine modification is found at serine 45. A compositionally biased stretch (basic and acidic residues) spans 54 to 78; that stretch reads EPDKEAGASVDEVTRQLERQALEEK. Serine 62 bears the Phosphoserine; alternate mark. O-linked (GlcNAc) serine; alternate glycosylation occurs at serine 62. Positions 79-91 are enriched in acidic residues; sequence EKDDDDEDGDGDG. A compositionally biased stretch (basic residues) spans 96–108; that stretch reads GKKKKKKKKKRGP. Histidine 230 serves as a coordination point for substrate. Positions 250, 261, and 330 each coordinate a divalent metal cation. Substrate is bound at residue histidine 338. The a divalent metal cation site is built by glutamate 363 and glutamate 458.

It belongs to the peptidase M24A family. Methionine aminopeptidase eukaryotic type 2 subfamily. In terms of assembly, binds EIF2S1 at low magnesium concentrations. Interacts strongly with the eIF-2 gamma-subunit EIF2S3. The cofactor is Co(2+). Zn(2+) is required as a cofactor. Mn(2+) serves as cofactor. Requires Fe(2+) as cofactor. Contains approximately 12 O-linked N-acetylglucosamine (GlcNAc) residues. O-glycosylation is required for EIF2S1 binding.

Its subcellular location is the cytoplasm. It carries out the reaction Release of N-terminal amino acids, preferentially methionine, from peptides and arylamides.. Functionally, cotranslationally removes the N-terminal methionine from nascent proteins. The N-terminal methionine is often cleaved when the second residue in the primary sequence is small and uncharged (Met-Ala-, Cys, Gly, Pro, Ser, Thr, or Val). Protects eukaryotic initiation factor EIF2S1 from translation-inhibiting phosphorylation by inhibitory kinases such as EIF2AK2/PKR and EIF2AK1/HCR. Plays a critical role in the regulation of protein synthesis. In Bos taurus (Bovine), this protein is Methionine aminopeptidase 2.